The following is a 164-amino-acid chain: Lipoprotein signal peptidase (164 aa).

A run of 4 helical transmembrane segments spans residues 11–31, 41–61, 64–84, and 92–112; these read YWVL…AVLS, VIPS…FSFL, QGGW…AYLV, and FAAL…GNVI. Active-site residues include Asp-122 and Asp-140. A helical transmembrane segment spans residues 132–152; that stretch reads FYPAFNIADSFICVGAVLAVL.

It belongs to the peptidase A8 family.

It is found in the cell inner membrane. The catalysed reaction is Release of signal peptides from bacterial membrane prolipoproteins. Hydrolyzes -Xaa-Yaa-Zaa-|-(S,diacylglyceryl)Cys-, in which Xaa is hydrophobic (preferably Leu), and Yaa (Ala or Ser) and Zaa (Gly or Ala) have small, neutral side chains.. It functions in the pathway protein modification; lipoprotein biosynthesis (signal peptide cleavage). Functionally, this protein specifically catalyzes the removal of signal peptides from prolipoproteins. The protein is Lipoprotein signal peptidase of Neisseria gonorrhoeae (strain ATCC 700825 / FA 1090).